A 214-amino-acid chain; its full sequence is Large ribosomal subunit protein uL4 (214 aa).

Positions threonine 56–lysine 86 are disordered. A compositionally biased stretch (basic residues) spans lysine 71–serine 85.

This sequence belongs to the universal ribosomal protein uL4 family. As to quaternary structure, part of the 50S ribosomal subunit.

Its function is as follows. One of the primary rRNA binding proteins, this protein initially binds near the 5'-end of the 23S rRNA. It is important during the early stages of 50S assembly. It makes multiple contacts with different domains of the 23S rRNA in the assembled 50S subunit and ribosome. Functionally, forms part of the polypeptide exit tunnel. The sequence is that of Large ribosomal subunit protein uL4 from Mesomycoplasma hyopneumoniae (strain 232) (Mycoplasma hyopneumoniae).